The primary structure comprises 353 residues: Protein RecA (353 aa).

67–74 (GPESSGKT) contacts ATP. Residues 330 to 353 (SNPNSTPDFSVDDSEGVAETNEDF) form a disordered region. The span at 339 to 353 (SVDDSEGVAETNEDF) shows a compositional bias: acidic residues.

The protein belongs to the RecA family.

The protein resides in the cytoplasm. Can catalyze the hydrolysis of ATP in the presence of single-stranded DNA, the ATP-dependent uptake of single-stranded DNA by duplex DNA, and the ATP-dependent hybridization of homologous single-stranded DNAs. It interacts with LexA causing its activation and leading to its autocatalytic cleavage. The polypeptide is Protein RecA (Shigella sonnei).